We begin with the raw amino-acid sequence, 325 residues long: Bifunctional ligase/repressor BirA (325 aa).

Positions 23 to 42 (GQKISDALGCSRTAVWKHIE) form a DNA-binding region, H-T-H motif. A BPL/LPL catalytic domain is found at 74 to 262 (RFGLKTEVMG…CFEKRYRDYM (189 aa)). Residues Gln-118, 122–124 (RGR), and Lys-189 contribute to the biotin site.

The protein belongs to the biotin--protein ligase family.

The enzyme catalyses biotin + L-lysyl-[protein] + ATP = N(6)-biotinyl-L-lysyl-[protein] + AMP + diphosphate + H(+). In terms of biological role, acts both as a biotin--[acetyl-CoA-carboxylase] ligase and a repressor. This is Bifunctional ligase/repressor BirA from Bacillus spizizenii (strain ATCC 23059 / NRRL B-14472 / W23) (Bacillus subtilis subsp. spizizenii).